Here is a 244-residue protein sequence, read N- to C-terminus: Carboxy-S-adenosyl-L-methionine synthase (244 aa).

Residues Tyr-40, Gly-65 to Ser-67, Asp-90 to Asn-91, Asp-119 to Ile-120, Asn-134, and Arg-201 contribute to the S-adenosyl-L-methionine site.

This sequence belongs to the class I-like SAM-binding methyltransferase superfamily. Cx-SAM synthase family. Homodimer.

It catalyses the reaction prephenate + S-adenosyl-L-methionine = carboxy-S-adenosyl-L-methionine + 3-phenylpyruvate + H2O. Its function is as follows. Catalyzes the conversion of S-adenosyl-L-methionine (SAM) to carboxy-S-adenosyl-L-methionine (Cx-SAM). This Geobacter sp. (strain M21) protein is Carboxy-S-adenosyl-L-methionine synthase.